Here is a 240-residue protein sequence, read N- to C-terminus: Phosducin-like protein 2 (240 aa).

The 164-residue stretch at 38–201 (QQEAMVKPYE…LEWKLSEVGA (164 aa)) folds into the Phosducin domain. The thioredoxin fold stretch occupies residues 89–240 (FGELREISGN…DSSGSDTEAK (152 aa)).

It belongs to the phosducin family. In terms of assembly, interacts with the CCT chaperonin complex and actin. Testis-specific (at protein level).

The protein localises to the endoplasmic reticulum. Essential for male fertility, spermiogenesis and acrosome formation. The chain is Phosducin-like protein 2 (Pdcl2) from Mus musculus (Mouse).